The sequence spans 930 residues: Translation initiation factor IF-2 (930 aa).

Residues 50–67 are compositionally biased toward low complexity; sequence FKPAAAPKVEAKPAAPKV. Disordered stretches follow at residues 50 to 217 and 260 to 346; these read FKPA…SSEE and EVVP…HELP. Composition is skewed to basic and acidic residues over residues 68–90 and 110–125; these read SAEK…EAKP and FKAE…AERR. The span at 129–141 shows a compositional bias: low complexity; that stretch reads KGNNRDQQQNGNR. Composition is skewed to basic and acidic residues over residues 157-167 and 262-295; these read RDNRRFNDQAK and VPEK…DGPR. A compositionally biased stretch (low complexity) spans 309-318; that stretch reads NQKNSNWNNN. Basic and acidic residues predominate over residues 337-346; that stretch reads VTERKFHELP. The tr-type G domain occupies 432–599; the sequence is ERPPVVTIMG…TVLLVAEIQE (168 aa). The G1 stretch occupies residues 441–448; that stretch reads GHVDHGKT. 441–448 is a GTP binding site; sequence GHVDHGKT. The tract at residues 466–470 is G2; it reads GITQH. The tract at residues 487-490 is G3; it reads DTPG. Residues 487-491 and 541-544 contribute to the GTP site; these read DTPGH and NKID. A G4 region spans residues 541-544; that stretch reads NKID. Positions 577–579 are G5; the sequence is SAK.

Belongs to the TRAFAC class translation factor GTPase superfamily. Classic translation factor GTPase family. IF-2 subfamily.

The protein localises to the cytoplasm. In terms of biological role, one of the essential components for the initiation of protein synthesis. Protects formylmethionyl-tRNA from spontaneous hydrolysis and promotes its binding to the 30S ribosomal subunits. Also involved in the hydrolysis of GTP during the formation of the 70S ribosomal complex. In Streptococcus pneumoniae (strain P1031), this protein is Translation initiation factor IF-2.